The chain runs to 147 residues: Hemoglobin subunit gamma (147 aa).

Residues 3-147 form the Globin domain; that stretch reads HFTAEEKAAI…VANALAYKYH (145 aa). Residues His-64 and His-93 each contribute to the heme b site.

Belongs to the globin family. Heterotetramer of two alpha chains and two gamma chains in fetal hemoglobin (Hb F). Red blood cells.

Functionally, gamma chains make up the fetal hemoglobin F, in combination with alpha chains. The sequence is that of Hemoglobin subunit gamma (HBG) from Loxodonta africana (African elephant).